Here is a 246-residue protein sequence, read N- to C-terminus: Ribonuclease PH (246 aa).

The disordered stretch occupies residues 1 to 33; the sequence is MTPPKLPVREGRDALTPRPVSVQRGVNPHAPGS. Phosphate contacts are provided by residues Arg90 and 128–130; that span reads GTR.

It belongs to the RNase PH family. As to quaternary structure, homohexameric ring arranged as a trimer of dimers.

It catalyses the reaction tRNA(n+1) + phosphate = tRNA(n) + a ribonucleoside 5'-diphosphate. Functionally, phosphorolytic 3'-5' exoribonuclease that plays an important role in tRNA 3'-end maturation. Removes nucleotide residues following the 3'-CCA terminus of tRNAs; can also add nucleotides to the ends of RNA molecules by using nucleoside diphosphates as substrates, but this may not be physiologically important. Probably plays a role in initiation of 16S rRNA degradation (leading to ribosome degradation) during starvation. In Deinococcus radiodurans (strain ATCC 13939 / DSM 20539 / JCM 16871 / CCUG 27074 / LMG 4051 / NBRC 15346 / NCIMB 9279 / VKM B-1422 / R1), this protein is Ribonuclease PH.